We begin with the raw amino-acid sequence, 458 residues long: Sensor histidine kinase ZraS (458 aa).

Residues 1 to 14 (MRFMQRSKDSLAKW) lie on the Cytoplasmic side of the membrane. A helical transmembrane segment spans residues 15-35 (LSAILPVVIVGLVGLFAVTVI). Residues 36 to 194 (RDYGRETAAA…SAEDREQRNT (159 aa)) are Periplasmic-facing. The helical transmembrane segment at 195-215 (LIILFALATVLLASVLSFFWY) threads the bilayer. Topologically, residues 216–458 (RRYLRSRQLL…VNITRKDPQG (243 aa)) are cytoplasmic. In terms of domain architecture, Histidine kinase spans 244 to 451 (GVAHEIRNPL…RFTLWLPVNI (208 aa)). H247 carries the phosphohistidine; by autocatalysis modification.

Autophosphorylated.

The protein resides in the cell inner membrane. The catalysed reaction is ATP + protein L-histidine = ADP + protein N-phospho-L-histidine.. With respect to regulation, activity of the ZraS/ZraR two-component system is repressed by the zinc-bound form of ZraP, which probably interacts with the periplasmic region of ZraS. In terms of biological role, part of the Zra signaling pathway, an envelope stress response (ESR) system composed of the periplasmic accessory protein ZraP, the histidine kinase ZraS and the transcriptional regulator ZraR. The ZraPSR system contributes to antibiotic resistance and is important for membrane integrity in the presence of membrane-targeting biocides. ZraS is a member of the two-component regulatory system ZraS/ZraR. Functions as a membrane-associated sensor kinase that phosphorylates ZraR in response to high concentrations of Zn(2+) or Pb(2+) in the medium. In Escherichia coli O157:H7, this protein is Sensor histidine kinase ZraS (zraS).